A 120-amino-acid polypeptide reads, in one-letter code: Seripauperin-8 (120 aa).

Residues 1–20 form the signal peptide; sequence MVKLTSIAAGVAAIAATASA.

The protein belongs to the SRP1/TIP1 family. Seripauperin subfamily.

This Saccharomyces cerevisiae (strain ATCC 204508 / S288c) (Baker's yeast) protein is Seripauperin-8 (PAU8).